The chain runs to 375 residues: UDP-N-acetylglucosamine--N-acetylmuramyl-(pentapeptide) pyrophosphoryl-undecaprenol N-acetylglucosamine transferase (375 aa).

UDP-N-acetyl-alpha-D-glucosamine-binding positions include 13 to 15 (TGG), Asn124, Arg165, Ser193, and Gln294.

This sequence belongs to the glycosyltransferase 28 family. MurG subfamily.

The protein localises to the cell inner membrane. It carries out the reaction di-trans,octa-cis-undecaprenyl diphospho-N-acetyl-alpha-D-muramoyl-L-alanyl-D-glutamyl-meso-2,6-diaminopimeloyl-D-alanyl-D-alanine + UDP-N-acetyl-alpha-D-glucosamine = di-trans,octa-cis-undecaprenyl diphospho-[N-acetyl-alpha-D-glucosaminyl-(1-&gt;4)]-N-acetyl-alpha-D-muramoyl-L-alanyl-D-glutamyl-meso-2,6-diaminopimeloyl-D-alanyl-D-alanine + UDP + H(+). It participates in cell wall biogenesis; peptidoglycan biosynthesis. In terms of biological role, cell wall formation. Catalyzes the transfer of a GlcNAc subunit on undecaprenyl-pyrophosphoryl-MurNAc-pentapeptide (lipid intermediate I) to form undecaprenyl-pyrophosphoryl-MurNAc-(pentapeptide)GlcNAc (lipid intermediate II). This is UDP-N-acetylglucosamine--N-acetylmuramyl-(pentapeptide) pyrophosphoryl-undecaprenol N-acetylglucosamine transferase from Mesorhizobium japonicum (strain LMG 29417 / CECT 9101 / MAFF 303099) (Mesorhizobium loti (strain MAFF 303099)).